We begin with the raw amino-acid sequence, 278 residues long: Probable endonuclease 4 (278 aa).

Residues H66, H106, E142, D176, H179, H213, D226, H228, and E258 each contribute to the Zn(2+) site.

This sequence belongs to the AP endonuclease 2 family. Requires Zn(2+) as cofactor.

The enzyme catalyses Endonucleolytic cleavage to 5'-phosphooligonucleotide end-products.. Its function is as follows. Endonuclease IV plays a role in DNA repair. It cleaves phosphodiester bonds at apurinic or apyrimidinic (AP) sites, generating a 3'-hydroxyl group and a 5'-terminal sugar phosphate. This is Probable endonuclease 4 from Halothermothrix orenii (strain H 168 / OCM 544 / DSM 9562).